The sequence spans 222 residues: Uracil-DNA glycosylase (222 aa).

The Proton acceptor role is filled by Asp-66.

It belongs to the uracil-DNA glycosylase (UDG) superfamily. UNG family.

The protein localises to the cytoplasm. It carries out the reaction Hydrolyzes single-stranded DNA or mismatched double-stranded DNA and polynucleotides, releasing free uracil.. Excises uracil residues from the DNA which can arise as a result of misincorporation of dUMP residues by DNA polymerase or due to deamination of cytosine. This chain is Uracil-DNA glycosylase, found in Porphyromonas gingivalis (strain ATCC 33277 / DSM 20709 / CIP 103683 / JCM 12257 / NCTC 11834 / 2561).